A 43-amino-acid polypeptide reads, in one-letter code: Protein PsbN (43 aa).

Residues threonine 5 to valine 25 traverse the membrane as a helical segment.

The protein belongs to the PsbN family.

It is found in the plastid. The protein localises to the chloroplast thylakoid membrane. Functionally, may play a role in photosystem I and II biogenesis. This is Protein PsbN from Cyanidioschyzon merolae (strain NIES-3377 / 10D) (Unicellular red alga).